The primary structure comprises 545 residues: Propane 2-monooxygenase, hydroxylase component large subunit (545 aa).

Residues Glu-97, Glu-127, His-130, Glu-192, Glu-226, and His-229 each coordinate Fe cation.

This sequence belongs to the TmoA/XamoA family. As to quaternary structure, the propane 2-monooxygenase multicomponent enzyme system is composed of an electron transfer component and a monooxygenase component interacting with the effector protein PrmD. The electron transfer component is composed of a reductase (PrmB), and the monooxygenase component is formed by a large subunit (PrmA) and a small subunit (PrmC). Probably requires the presence of the chaperonin-like protein PrmG to ensure a productive folding, resulting of a soluble PrmA, which leads to the active form of PrmABCD. Fe(2+) serves as cofactor.

It catalyses the reaction propane + NADH + O2 + H(+) = propan-2-ol + NAD(+) + H2O. The catalysed reaction is phenol + NADH + O2 + H(+) = hydroquinone + NAD(+) + H2O. Functionally, component of the propane 2-monooxygenase multicomponent enzyme system which is involved in the degradation of propane via the O2-dependent hydroxylation of propane. Under acetone induction, also able to catalyze the oxidation of phenol to yield hydroquinone. In Gordonia sp. (strain TY-5), this protein is Propane 2-monooxygenase, hydroxylase component large subunit.